Consider the following 83-residue polypeptide: Apolipoprotein C-I, basic form (83 aa).

Positions 1–26 are cleaved as a signal peptide; sequence MRLFLSLPVLVVVLSMVLEGPAPAQG.

It belongs to the apolipoprotein C1 family.

The protein resides in the secreted. Its function is as follows. Inhibitor of lipoprotein binding to the low density lipoprotein (LDL) receptor, LDL receptor-related protein, and very low density lipoprotein (VLDL) receptor. Associates with high density lipoproteins (HDL) and the triacylglycerol-rich lipoproteins in the plasma and makes up about 10% of the protein of the VLDL and 2% of that of HDL. Appears to interfere directly with fatty acid uptake and is also the major plasma inhibitor of cholesteryl ester transfer protein (CETP). Binds free fatty acids and reduces their intracellular esterification. Modulates the interaction of APOE with beta-migrating VLDL and inhibits binding of beta-VLDL to the LDL receptor-related protein. The sequence is that of Apolipoprotein C-I, basic form (APOC1B) from Cercocebus atys (Sooty mangabey).